Here is a 375-residue protein sequence, read N- to C-terminus: 23S rRNA (uracil(747)-C(5))-methyltransferase RlmC (375 aa).

Residues cysteine 3, cysteine 11, cysteine 14, and cysteine 87 each contribute to the [4Fe-4S] cluster site. Positions 212, 241, 262, and 307 each coordinate S-adenosyl-L-methionine. Cysteine 334 functions as the Nucleophile in the catalytic mechanism.

It belongs to the class I-like SAM-binding methyltransferase superfamily. RNA M5U methyltransferase family. RlmC subfamily.

It carries out the reaction uridine(747) in 23S rRNA + S-adenosyl-L-methionine = 5-methyluridine(747) in 23S rRNA + S-adenosyl-L-homocysteine + H(+). Catalyzes the formation of 5-methyl-uridine at position 747 (m5U747) in 23S rRNA. The sequence is that of 23S rRNA (uracil(747)-C(5))-methyltransferase RlmC from Salmonella typhi.